A 945-amino-acid chain; its full sequence is Kinesin-like protein KIN-UA (945 aa).

The segment at 1-54 is disordered; the sequence is MAANGRASVRPVERHGAPPRPAGRSRSVAPPSRRPSPSPSRARPAAADNDGGSD. Over residues 22–31 the composition is skewed to low complexity; it reads AGRSRSVAPP. The region spanning 57-399 is the Kinesin motor domain; sequence RVRVAVRLRP…IMFGQRAMKI (343 aa). ATP is bound at residue 142 to 149; it reads GQTGTGKT. Residues 369–377 carry the D-BOX motif; that stretch reads RTSLIVTIG. Positions 415–644 form a coiled coil; that stretch reads YKKVEHEVDH…ILRLKQSLAD (230 aa). 4 ARM repeats span residues 683–722, 724–764, 766–806, and 808–847; these read RSNI…NLAA, DVNQ…NLAM, GSNQ…NLCG, and EKLH…NFAK.

It belongs to the TRAFAC class myosin-kinesin ATPase superfamily. Kinesin family. Ungrouped subfamily.

It localises to the cytoplasm. The protein resides in the cytoskeleton. This is Kinesin-like protein KIN-UA from Oryza sativa subsp. japonica (Rice).